The chain runs to 432 residues: Short/branched chain specific acyl-CoA dehydrogenase, mitochondrial (432 aa).

The N-terminal 33 residues, 1 to 33, are a transit peptide targeting the mitochondrion; that stretch reads MAVSAFQLWRAGGLLRRNFLTHSSSWKIPPRVL. K70 bears the N6-acetyllysine; alternate mark. Residue K70 is modified to N6-succinyllysine; alternate. Residues 174–183 and 207–209 contribute to the FAD site; these read FCLSEAGAGS and WIS. S183 is a binding site for substrate. S183 carries the phosphoserine modification. Y229 serves as a coordination point for substrate. At K278 the chain carries N6-succinyllysine. Residue Y283 coordinates substrate. Position 284 is an N6-acetyllysine; alternate (K284). At K284 the chain carries N6-succinyllysine; alternate. 291 to 294 serves as a coordination point for substrate; it reads NEGR. Residues R319, Q330, and 387–391 contribute to the FAD site; that span reads EWMGG. Catalysis depends on E414, which acts as the Proton acceptor. 416-418 provides a ligand contact to FAD; sequence TSN. Position 426 is an N6-acetyllysine (K426).

Belongs to the acyl-CoA dehydrogenase family. Homotetramer. The cofactor is FAD. In terms of tissue distribution, ubiquitously expressed.

Its subcellular location is the mitochondrion matrix. The catalysed reaction is 2-methylbutanoyl-CoA + oxidized [electron-transfer flavoprotein] + H(+) = (2E)-2-methylbut-2-enoyl-CoA + reduced [electron-transfer flavoprotein]. It catalyses the reaction (2S)-2-methylbutanoyl-CoA + oxidized [electron-transfer flavoprotein] + H(+) = (2E)-2-methylbut-2-enoyl-CoA + reduced [electron-transfer flavoprotein]. The enzyme catalyses (2R)-2-methylbutanoyl-CoA + oxidized [electron-transfer flavoprotein] + H(+) = ethylacryloyl-CoA + reduced [electron-transfer flavoprotein]. It carries out the reaction butanoyl-CoA + oxidized [electron-transfer flavoprotein] + H(+) = (2E)-butenoyl-CoA + reduced [electron-transfer flavoprotein]. The catalysed reaction is 2-methylpropanoyl-CoA + oxidized [electron-transfer flavoprotein] + H(+) = 2-methylpropenoyl-CoA + reduced [electron-transfer flavoprotein]. It catalyses the reaction hexanoyl-CoA + oxidized [electron-transfer flavoprotein] + H(+) = (2E)-hexenoyl-CoA + reduced [electron-transfer flavoprotein]. The enzyme catalyses valproyl-CoA + oxidized [electron-transfer flavoprotein] + H(+) = (2E)-2-propylpent-2-enoyl-CoA + reduced [electron-transfer flavoprotein]. The protein operates within lipid metabolism; mitochondrial fatty acid beta-oxidation. Its pathway is amino-acid degradation; L-isoleucine degradation. With respect to regulation, inhibited by N-ethylmaleimide, hydroxymercuribenzoate, methyl mercury iodide and heavy metals such as Hg2+, Cu2+, and Ag2+. Its function is as follows. Short and branched chain specific acyl-CoA dehydrogenase that catalyzes the removal of one hydrogen from C-2 and C-3 of the fatty acyl-CoA thioester, resulting in the formation of trans-2-enoyl-CoA. Among the different mitochondrial acyl-CoA dehydrogenases, acts specifically on short and branched chain acyl-CoA derivatives such as (S)-2-methylbutyryl-CoA as well as short straight chain acyl-CoAs such as butyryl-CoA. Plays an important role in the metabolism of L-isoleucine by catalyzing the dehydrogenation of 2-methylbutyryl-CoA, one of the steps of the L-isoleucine catabolic pathway. Can also act on valproyl-CoA, a metabolite of the valproic acid drug. The sequence is that of Short/branched chain specific acyl-CoA dehydrogenase, mitochondrial from Rattus norvegicus (Rat).